Here is a 401-residue protein sequence, read N- to C-terminus: tRNA(Met) cytidine acetate ligase (401 aa).

ATP contacts are provided by residues 7–20 (IVEY…HLYH), Gly-101, Asn-160, and 185–186 (RI).

Belongs to the TmcAL family.

It is found in the cytoplasm. The catalysed reaction is cytidine(34) in elongator tRNA(Met) + acetate + ATP = N(4)-acetylcytidine(34) in elongator tRNA(Met) + AMP + diphosphate. Catalyzes the formation of N(4)-acetylcytidine (ac(4)C) at the wobble position of elongator tRNA(Met), using acetate and ATP as substrates. First activates an acetate ion to form acetyladenylate (Ac-AMP) and then transfers the acetyl group to tRNA to form ac(4)C34. The chain is tRNA(Met) cytidine acetate ligase from Geobacillus sp. (strain WCH70).